The primary structure comprises 423 residues: Histidine--tRNA ligase (423 aa).

Belongs to the class-II aminoacyl-tRNA synthetase family. In terms of assembly, homodimer.

The protein localises to the cytoplasm. It carries out the reaction tRNA(His) + L-histidine + ATP = L-histidyl-tRNA(His) + AMP + diphosphate + H(+). This chain is Histidine--tRNA ligase (hisS), found in Haemophilus influenzae (strain ATCC 51907 / DSM 11121 / KW20 / Rd).